Reading from the N-terminus, the 147-residue chain is Leghemoglobin-1 (147 aa).

In terms of domain architecture, Globin spans 2 to 147 (SFTDKQEALV…LATAIKKAMS (146 aa)). 2 positions are modified to nitrated tyrosine: Y25 and Y30. S45 lines the heme b pocket. S45 is modified (phosphoserine). Position 62 (H62) interacts with O2. 3 residues coordinate heme b: K65, H94, and K97. Y135 is modified (nitrated tyrosine).

It belongs to the plant globin family. Monomer. Post-translationally, nitrated in effective nodules and particularly in hypoxic conditions; this mechanism may play a protective role in the symbiosis by buffering toxic peroxynitrite NO(2)(-). Nitration level decrease during nodule senescence. Phosphorylation at Ser-45 disrupts the molecular environment of its porphyrin ring oxygen binding pocket, thus leading to a reduced oxygen consumption and to the delivery of oxygen O(2) to symbiosomes. Root nodules.

It is found in the cytoplasm. Its subcellular location is the cytosol. The protein localises to the nucleus. Leghemoglobin that reversibly binds oxygen O(2) through a pentacoordinated heme iron. In root nodules, facilitates the diffusion of oxygen to the bacteroids while preventing the bacterial nitrogenase from being inactivated by buffering dioxygen, nitric oxide and carbon monoxide, and promoting the formation of reactive oxygen species (ROS, e.g. H(2)O(2)). This role is essential for symbiotic nitrogen fixation (SNF). In Medicago sativa (Alfalfa), this protein is Leghemoglobin-1.